Consider the following 344-residue polypeptide: Phosphoribosylformylglycinamidine cyclo-ligase (344 aa).

This sequence belongs to the AIR synthase family.

Its subcellular location is the cytoplasm. The enzyme catalyses 2-formamido-N(1)-(5-O-phospho-beta-D-ribosyl)acetamidine + ATP = 5-amino-1-(5-phospho-beta-D-ribosyl)imidazole + ADP + phosphate + H(+). It participates in purine metabolism; IMP biosynthesis via de novo pathway; 5-amino-1-(5-phospho-D-ribosyl)imidazole from N(2)-formyl-N(1)-(5-phospho-D-ribosyl)glycinamide: step 2/2. This Haemophilus influenzae (strain 86-028NP) protein is Phosphoribosylformylglycinamidine cyclo-ligase.